Reading from the N-terminus, the 138-residue chain is Phosphoribosyl-AMP cyclohydrolase (138 aa).

Position 84 (Asp-84) interacts with Mg(2+). Cys-85 contributes to the Zn(2+) binding site. Mg(2+) contacts are provided by Asp-86 and Asp-88. 2 residues coordinate Zn(2+): Cys-102 and Cys-109.

It belongs to the PRA-CH family. Homodimer. Requires Mg(2+) as cofactor. It depends on Zn(2+) as a cofactor.

It localises to the cytoplasm. It carries out the reaction 1-(5-phospho-beta-D-ribosyl)-5'-AMP + H2O = 1-(5-phospho-beta-D-ribosyl)-5-[(5-phospho-beta-D-ribosylamino)methylideneamino]imidazole-4-carboxamide. It participates in amino-acid biosynthesis; L-histidine biosynthesis; L-histidine from 5-phospho-alpha-D-ribose 1-diphosphate: step 3/9. Catalyzes the hydrolysis of the adenine ring of phosphoribosyl-AMP. This chain is Phosphoribosyl-AMP cyclohydrolase, found in Burkholderia lata (strain ATCC 17760 / DSM 23089 / LMG 22485 / NCIMB 9086 / R18194 / 383).